The chain runs to 339 residues: Phenylalanine--tRNA ligase alpha subunit (339 aa).

Residue glutamate 254 coordinates Mg(2+).

The protein belongs to the class-II aminoacyl-tRNA synthetase family. Phe-tRNA synthetase alpha subunit type 1 subfamily. In terms of assembly, tetramer of two alpha and two beta subunits. Requires Mg(2+) as cofactor.

The protein resides in the cytoplasm. It carries out the reaction tRNA(Phe) + L-phenylalanine + ATP = L-phenylalanyl-tRNA(Phe) + AMP + diphosphate + H(+). The polypeptide is Phenylalanine--tRNA ligase alpha subunit (Clostridium botulinum (strain 657 / Type Ba4)).